The primary structure comprises 121 residues: Small ribosomal subunit protein uS13 (121 aa).

The tract at residues 91–121 (HRRGLPTRGQNTKNNARTRKGPVKTVANKKK) is disordered. Over residues 106–121 (ARTRKGPVKTVANKKK) the composition is skewed to basic residues.

This sequence belongs to the universal ribosomal protein uS13 family. In terms of assembly, part of the 30S ribosomal subunit. Forms a loose heterodimer with protein S19. Forms two bridges to the 50S subunit in the 70S ribosome.

In terms of biological role, located at the top of the head of the 30S subunit, it contacts several helices of the 16S rRNA. In the 70S ribosome it contacts the 23S rRNA (bridge B1a) and protein L5 of the 50S subunit (bridge B1b), connecting the 2 subunits; these bridges are implicated in subunit movement. Contacts the tRNAs in the A and P-sites. This chain is Small ribosomal subunit protein uS13, found in Macrococcus caseolyticus (strain JCSC5402) (Macrococcoides caseolyticum).